A 301-amino-acid polypeptide reads, in one-letter code: Protein ARMCX6 (301 aa).

The tract at residues 1 to 6 is mitochondrion outer membrane (MOM)-targeting sequence; sequence MGRARE. Residues 1–7 are Mitochondrial intermembrane-facing; sequence MGRAREM. Residues 8–25 traverse the membrane as a helical; Signal-anchor segment; sequence GWMAAGLMIGAGACYCMY. The mitochondrion outer membrane (MOM)-targeting sequence stretch occupies residues 26–36; it reads KLTMGRSEGNE. At 26 to 301 the chain is on the cytoplasmic side; sequence KLTMGRSEGN…REMLVEAISP (276 aa). The interval 69–101 is disordered; sequence WSEDGDWDEPGAPGGTEDRRSGGGKANRAHPIK.

Belongs to the eutherian X-chromosome-specific Armcx family. In terms of tissue distribution, highly expressed in the developing neural tissues, neural crest derivatives and hind limbs. Also widely expressed in the adult nervous tissue, especially in the forebrain, including the cerebral cortex, hippocampus and thalamus.

The protein localises to the mitochondrion. The protein resides in the mitochondrion outer membrane. In terms of biological role, may regulate the dynamics and distribution of mitochondria in neural cells. In Mus musculus (Mouse), this protein is Protein ARMCX6 (Armcx6).